A 91-amino-acid polypeptide reads, in one-letter code: Small ribosomal subunit protein uS19 (91 aa).

The protein belongs to the universal ribosomal protein uS19 family.

Its function is as follows. Protein S19 forms a complex with S13 that binds strongly to the 16S ribosomal RNA. The protein is Small ribosomal subunit protein uS19 of Lachnospira eligens (strain ATCC 27750 / DSM 3376 / VPI C15-48 / C15-B4) (Eubacterium eligens).